The primary structure comprises 273 residues: Endochitinase EP3 (273 aa).

An N-terminal signal peptide occupies residues 1 to 28 (MLTPTISKSISLVTILLVLQAFSNTTKA). The N-linked (GlcNAc...) asparagine glycan is linked to Asn-24. The Chitin-binding type-1 domain maps to 29 to 63 (QNCGCSSELCCSQFGFCGNTSDYCGVGCQQGPCFA). 4 disulfides stabilise this stretch: Cys-31/Cys-39, Cys-33/Cys-45, Cys-38/Cys-52, and Cys-56/Cys-61. A glycan (N-linked (GlcNAc...) asparagine) is linked at Asn-47. The catalytic stretch occupies residues 70-273 (VSVAEIVTQE…GVDPGNNLTC (204 aa)). The Proton donor role is filled by Glu-136. N-linked (GlcNAc...) asparagine glycans are attached at residues Asn-157 and Asn-270.

This sequence belongs to the glycosyl hydrolase 19 family. Chitinase class I subfamily. In terms of tissue distribution, expressed in cells surrounding embryos, stems, seedlings, pollen, roots, shoots, inflorescence, flowers, siliques and leaves. Present in seedpods and seed embryos, but not in roots, inflorescence stems, leaves and flowers.

It carries out the reaction Random endo-hydrolysis of N-acetyl-beta-D-glucosaminide (1-&gt;4)-beta-linkages in chitin and chitodextrins.. Its function is as follows. Probably involved in hypersensitive reaction upon Xanthomonas campestris infection. The sequence is that of Endochitinase EP3 from Arabidopsis thaliana (Mouse-ear cress).